The following is a 284-amino-acid chain: NH(3)-dependent NAD(+) synthetase (284 aa).

51-58 contributes to the ATP binding site; it reads GISGGIDS. Asp57 contacts Mg(2+). Arg148 contacts deamido-NAD(+). Thr168 lines the ATP pocket. Glu173 serves as a coordination point for Mg(2+). Residues Lys181 and Asp188 each contribute to the deamido-NAD(+) site. ATP is bound by residues Lys197 and Thr219. 268–269 provides a ligand contact to deamido-NAD(+); that stretch reads HK.

This sequence belongs to the NAD synthetase family. As to quaternary structure, homodimer.

It carries out the reaction deamido-NAD(+) + NH4(+) + ATP = AMP + diphosphate + NAD(+) + H(+). Its pathway is cofactor biosynthesis; NAD(+) biosynthesis; NAD(+) from deamido-NAD(+) (ammonia route): step 1/1. Its function is as follows. Catalyzes the ATP-dependent amidation of deamido-NAD to form NAD. Uses ammonia as a nitrogen source. This Burkholderia pseudomallei (strain 1106a) protein is NH(3)-dependent NAD(+) synthetase.